Reading from the N-terminus, the 360-residue chain is uncharacterized protein (360 aa).

Residues 1–33 form a disordered region; it reads MSGRRKGCSAATASSSSSSPPSRLPPLPGHARR.

Belongs to the herpesviridae US22 family.

This is an uncharacterized protein from Human cytomegalovirus (strain AD169) (HHV-5).